A 510-amino-acid chain; its full sequence is Cytochrome P450 90D2 (510 aa).

The helical transmembrane segment at 6-26 (MVGSGGVYSWPAALLVAAIVV) threads the bilayer. Cys444 provides a ligand contact to heme.

The protein belongs to the cytochrome P450 family. Heme serves as cofactor.

Its subcellular location is the membrane. The enzyme catalyses 3-epi-6-deoxocathasterone + reduced [NADPH--hemoprotein reductase] + O2 = 6-deoxotyphasterol + oxidized [NADPH--hemoprotein reductase] + H2O + H(+). It carries out the reaction (22S,24R)-22-hydroxy-5alpha-ergostan-3-one + reduced [NADPH--hemoprotein reductase] + O2 = 3-dehydro-6-deoxoteasterone + oxidized [NADPH--hemoprotein reductase] + H2O + H(+). The catalysed reaction is 6-deoxycathasterone + reduced [NADPH--hemoprotein reductase] + O2 = 6-deoxoteasterone + oxidized [NADPH--hemoprotein reductase] + H2O + H(+). The protein operates within plant hormone biosynthesis; brassinosteroid biosynthesis. Functionally, involved in reduction steps of the biosynthesis of plant campesterol-derivative steroids, ending to castasterone (CS) but missing brassinolide (BL). Catalyzes the conversion of (22S,24R)-22-hydroxy-5alpha-ergostan-3-one (22-hydroxy-campesta-3-one, 22-OH-3-one) to 3-dehydro-6-deoxoteasterone (6-deoxo3DT, 6-deoxo-3-DHT), 3-epi-6-deoxocathasterone (3-epi-6-deoxoCT) to 6-deoxotyphasterol (6-deoxoTY) and of 6-deoxocathasterone (6-deoxoCT) to 6-deoxoteasterone (6-deoxoTE). The polypeptide is Cytochrome P450 90D2 (Brachypodium distachyon (Purple false brome)).